We begin with the raw amino-acid sequence, 394 residues long: Elongation factor Tu (394 aa).

One can recognise a tr-type G domain in the interval 10–204; the sequence is KPHVNVGTIG…ALDSYIPEPQ (195 aa). The segment at 19-26 is G1; that stretch reads GHVDHGKT. 19 to 26 serves as a coordination point for GTP; that stretch reads GHVDHGKT. A Mg(2+)-binding site is contributed by Thr26. Residues 60–64 form a G2 region; sequence GITIN. The G3 stretch occupies residues 81–84; the sequence is DCPG. Residues 81–85 and 136–139 contribute to the GTP site; these read DCPGH and NKCD. A G4 region spans residues 136-139; that stretch reads NKCD. A G5 region spans residues 174–176; the sequence is SAL.

Belongs to the TRAFAC class translation factor GTPase superfamily. Classic translation factor GTPase family. EF-Tu/EF-1A subfamily. Monomer.

The protein localises to the cytoplasm. It carries out the reaction GTP + H2O = GDP + phosphate + H(+). GTP hydrolase that promotes the GTP-dependent binding of aminoacyl-tRNA to the A-site of ribosomes during protein biosynthesis. In Shewanella baltica (strain OS185), this protein is Elongation factor Tu.